We begin with the raw amino-acid sequence, 282 residues long: Pyrroline-5-carboxylate reductase (282 aa).

The protein belongs to the pyrroline-5-carboxylate reductase family.

It carries out the reaction L-proline + NADP(+) = (S)-1-pyrroline-5-carboxylate + NADPH + 2 H(+). The enzyme catalyses L-proline + NAD(+) = (S)-1-pyrroline-5-carboxylate + NADH + 2 H(+). The protein operates within amino-acid biosynthesis; L-proline biosynthesis; L-proline from L-glutamate 5-semialdehyde: step 1/1. This is Pyrroline-5-carboxylate reductase (pro3) from Schizosaccharomyces pombe (strain 972 / ATCC 24843) (Fission yeast).